The sequence spans 945 residues: MSFRKYYSWKYPDVPEDVAPLLLELKNSLVVVGVVGRSKCSLANKMSVFGMQPEETHEPANGQIMCYYKPGTSTLLLHFESTHDEVVLGQKLLEQTSIDFDHFYGNMRSQFVRMMLLALHTCHIVVYVETGQTFDPALVTICQLLKYVREQHLLEFLPQLLRETSAGNLLGDRARLCTPRILFIFENYPADVEKTREFISTHEFQTEDKIYELFRQYNIVMQSASNSLLALPNNKQFVFYNANEILRPDRLLLAIDALNATMYKQDVKEEEEDLEIIALAPFEGFVKPFGDAYTVRKSDEQLYRESHTVWHFLQRHVQDALEGCFDEGSFKQLSQSPPFQLLNFKTWHMCMVSIHKLLVGNVEDVNYVSTNAHYQAYLRDFTESLNYEKRFWYHLSELGLKKGISAYKHSAAVTYGSAAHKQMLANATLVFEEEGRGPYAELALAKLNDVCLRYWHDGRQQCEFPSLRGNPCILPRDVSHDKHSSGVVHISSCNCGRTLGRREDPYTLRQANYDYYEHMAVMCNLCVKVKRFQFPVFTPSISDYRAAAFEAAFPLLLQAHKNRAEPQVEEDSDQEANAAEEPYSQPATEAEPEPEKEPQASANEWSQPMSATYGSDLNMSIAGFGVSLKEGGAEAEVEEAEVCDKGSQDNSTSSDTSTESEIELQPKERSAQKANQILISTTEYLPGLVHMCSGLELLPLFPSWSLACVGPSSIYSHNTGLQEHFQSGFLSGANYLLPWDVQVRLVQPHYKHQQQQLMGKKNQRYRKQGDRLALKIFIGFEYECSRGHRFMMRSPERVLRGGADIERDTSTKVINNNMPLYFPCPCRAQNTFLAQLMRIHVVTPKAPVNIILDPKVLVGKYTFTLGCSILPMLSQSAYWILRLPYVYQGDNEIIAPPEKIEPTNRLAGGCILAGLFGIAETESMELKEPRITSMTFTRLQSHAYK.

2 disordered regions span residues 563 to 604 (RAEP…SANE) and 633 to 671 (AEAEVEEAEVCDKGSQDNSTSSDTSTESEIELQPKERSA).

Belongs to the SMG8 family.

Functionally, involved in nonsense-mediated decay (NMD) of mRNAs containing premature stop codons. Probable component of kinase complex containing nonC and recruited to stalled ribosomes. The sequence is that of Nonsense-mediated mRNA decay factor SMG8 from Drosophila grimshawi (Hawaiian fruit fly).